The primary structure comprises 250 residues: uncharacterized protein (250 aa).

A helical transmembrane segment spans residues 2-22 (ILRIIIFVIIILVVSLLLIYF).

Its subcellular location is the membrane. This is an uncharacterized protein from Acanthamoeba polyphaga (Amoeba).